An 82-amino-acid chain; its full sequence is Protein transport protein Sec61 subunit beta (82 aa).

At methionine 1 the chain carries N-acetylmethionine. Positions 1-34 are disordered; it reads MVGSGAPQRGSAAATASMRRRKPTSGAGGGGASG. Residues 1–55 are Cytoplasmic-facing; the sequence is MVGSGAPQRGSAAATASMRRRKPTSGAGGGGASGGAAGSMLQFYTDDAPGLKISP. A helical membrane pass occupies residues 56 to 76; that stretch reads NVVLIMSIGFIAFVAVLHVMG.

It belongs to the SEC61-beta family. Heterotrimeric complex composed of SEC61-alpha, SEC61-beta and SEC61-gamma.

The protein resides in the endoplasmic reticulum membrane. Necessary for protein translocation in the endoplasmic reticulum. The protein is Protein transport protein Sec61 subunit beta of Arabidopsis thaliana (Mouse-ear cress).